Here is a 581-residue protein sequence, read N- to C-terminus: NADH-quinone oxidoreductase subunit C/D (581 aa).

The interval 1–172 is NADH dehydrogenase I subunit C; the sequence is MSGAELISDL…PPFVMTAARF (172 aa). The NADH dehydrogenase I subunit D stretch occupies residues 196–581; that stretch reads ELMILNYGPH…IDYVMSDVDR (386 aa).

It in the N-terminal section; belongs to the complex I 30 kDa subunit family. This sequence in the C-terminal section; belongs to the complex I 49 kDa subunit family. As to quaternary structure, NDH-1 is composed of 13 different subunits. Subunits NuoB, CD, E, F, and G constitute the peripheral sector of the complex.

The protein resides in the cell inner membrane. It carries out the reaction a quinone + NADH + 5 H(+)(in) = a quinol + NAD(+) + 4 H(+)(out). In terms of biological role, NDH-1 shuttles electrons from NADH, via FMN and iron-sulfur (Fe-S) centers, to quinones in the respiratory chain. The immediate electron acceptor for the enzyme in this species is believed to be ubiquinone. Couples the redox reaction to proton translocation (for every two electrons transferred, four hydrogen ions are translocated across the cytoplasmic membrane), and thus conserves the redox energy in a proton gradient. This Rhodopseudomonas palustris (strain BisA53) protein is NADH-quinone oxidoreductase subunit C/D.